The chain runs to 304 residues: Voltage-dependent anion channel-forming protein YneE (304 aa).

A run of 4 helical transmembrane segments spans residues 28–48, 50–70, 209–229, and 235–255; these read LLLN…YTML, IKFT…FLGF, AYTL…PFAL, and YMTP…DALA.

It belongs to the anion channel-forming bestrophin (TC 1.A.46) family.

The protein localises to the cell membrane. The polypeptide is Voltage-dependent anion channel-forming protein YneE (yneE) (Salmonella typhi).